The sequence spans 529 residues: CTP synthase (529 aa).

Residues 1-266 (MTKYIIVTGG…TKKIFNKLGL (266 aa)) form an amidoligase domain region. Serine 13 lines the CTP pocket. Serine 13 is a UTP binding site. 14–19 (SVGKGT) lines the ATP pocket. Tyrosine 54 serves as a coordination point for L-glutamine. Aspartate 71 provides a ligand contact to ATP. Mg(2+) contacts are provided by aspartate 71 and glutamate 141. Residues 148 to 150 (DIE), 187 to 192 (KTKPLQ), and lysine 223 contribute to the CTP site. UTP is bound by residues 187–192 (KTKPLQ) and lysine 223. The Glutamine amidotransferase type-1 domain maps to 291–529 (KIALVGKYTK…FLNFLSVASA (239 aa)). Glycine 354 contacts L-glutamine. Cysteine 381 acts as the Nucleophile; for glutamine hydrolysis in catalysis. Residues 382 to 385 (FGMQ), glutamate 405, and arginine 462 each bind L-glutamine. Catalysis depends on residues histidine 506 and glutamate 508.

It belongs to the CTP synthase family. Homotetramer.

The catalysed reaction is UTP + L-glutamine + ATP + H2O = CTP + L-glutamate + ADP + phosphate + 2 H(+). It catalyses the reaction L-glutamine + H2O = L-glutamate + NH4(+). The enzyme catalyses UTP + NH4(+) + ATP = CTP + ADP + phosphate + 2 H(+). Its pathway is pyrimidine metabolism; CTP biosynthesis via de novo pathway; CTP from UDP: step 2/2. With respect to regulation, allosterically activated by GTP, when glutamine is the substrate; GTP has no effect on the reaction when ammonia is the substrate. The allosteric effector GTP functions by stabilizing the protein conformation that binds the tetrahedral intermediate(s) formed during glutamine hydrolysis. Inhibited by the product CTP, via allosteric rather than competitive inhibition. In terms of biological role, catalyzes the ATP-dependent amination of UTP to CTP with either L-glutamine or ammonia as the source of nitrogen. Regulates intracellular CTP levels through interactions with the four ribonucleotide triphosphates. This Sulfolobus acidocaldarius (strain ATCC 33909 / DSM 639 / JCM 8929 / NBRC 15157 / NCIMB 11770) protein is CTP synthase.